Reading from the N-terminus, the 218-residue chain is Protein-methionine-sulfoxide reductase heme-binding subunit MsrQ (218 aa).

A run of 5 helical transmembrane segments spans residues 14–34 (LVHA…WQVW), 60–80 (LLLI…AVVI), 86–106 (LGLY…TLDL), 121–141 (PYIT…ITST), and 155–175 (LHML…WLVK).

Belongs to the MsrQ family. In terms of assembly, heterodimer of a catalytic subunit (MsrP) and a heme-binding subunit (MsrQ). The cofactor is FMN. Heme b is required as a cofactor.

It is found in the cell inner membrane. Its function is as follows. Part of the MsrPQ system that repairs oxidized periplasmic proteins containing methionine sulfoxide residues (Met-O), using respiratory chain electrons. Thus protects these proteins from oxidative-stress damage caused by reactive species of oxygen and chlorine generated by the host defense mechanisms. MsrPQ is essential for the maintenance of envelope integrity under bleach stress, rescuing a wide series of structurally unrelated periplasmic proteins from methionine oxidation. MsrQ provides electrons for reduction to the reductase catalytic subunit MsrP, using the quinone pool of the respiratory chain. The chain is Protein-methionine-sulfoxide reductase heme-binding subunit MsrQ from Xanthomonas axonopodis pv. citri (strain 306).